A 163-amino-acid chain; its full sequence is Phosphopantetheine adenylyltransferase (163 aa).

Residue Thr-10 participates in substrate binding. Residues 10 to 11 (TF) and His-18 each bind ATP. 3 residues coordinate substrate: Lys-42, Leu-74, and Arg-88. Residues 89-91 (GLR), Glu-99, and 124-130 (NSFISST) each bind ATP.

The protein belongs to the bacterial CoaD family. As to quaternary structure, homohexamer. Mg(2+) serves as cofactor.

Its subcellular location is the cytoplasm. It catalyses the reaction (R)-4'-phosphopantetheine + ATP + H(+) = 3'-dephospho-CoA + diphosphate. It functions in the pathway cofactor biosynthesis; coenzyme A biosynthesis; CoA from (R)-pantothenate: step 4/5. Its function is as follows. Reversibly transfers an adenylyl group from ATP to 4'-phosphopantetheine, yielding dephospho-CoA (dPCoA) and pyrophosphate. This Shewanella putrefaciens (strain CN-32 / ATCC BAA-453) protein is Phosphopantetheine adenylyltransferase.